A 329-amino-acid chain; its full sequence is Probable acyltransferase FabY (329 aa).

The N-acetyltransferase domain maps to 18–162 (YHLRVPQTEE…RHFLMIKPVA (145 aa)).

This sequence belongs to the acetyltransferase family. FabY subfamily.

The protein operates within lipid metabolism; fatty acid biosynthesis. Its function is as follows. Supports initiation of fatty acid biosynthesis in the absence of FabH. The polypeptide is Probable acyltransferase FabY (Escherichia coli O157:H7).